We begin with the raw amino-acid sequence, 330 residues long: Ketol-acid reductoisomerase (NADP(+)) (330 aa).

Residues 2-182 (VKIFYDKDVT…GLTKVGVIQT (181 aa)) form the KARI N-terminal Rossmann domain. Residues 25-28 (YGSQ), Arg-48, Ser-53, and 83-86 (DEVQ) each bind NADP(+). Residue His-108 is part of the active site. NADP(+) is bound at residue Gly-134. One can recognise a KARI C-terminal knotted domain in the interval 183–328 (TFREETETDL…KELRKMCGLE (146 aa)). Mg(2+) is bound by residues Asp-191, Glu-195, Glu-227, and Glu-231. A substrate-binding site is contributed by Ser-252.

This sequence belongs to the ketol-acid reductoisomerase family. Mg(2+) serves as cofactor.

The catalysed reaction is (2R)-2,3-dihydroxy-3-methylbutanoate + NADP(+) = (2S)-2-acetolactate + NADPH + H(+). The enzyme catalyses (2R,3R)-2,3-dihydroxy-3-methylpentanoate + NADP(+) = (S)-2-ethyl-2-hydroxy-3-oxobutanoate + NADPH + H(+). It participates in amino-acid biosynthesis; L-isoleucine biosynthesis; L-isoleucine from 2-oxobutanoate: step 2/4. It functions in the pathway amino-acid biosynthesis; L-valine biosynthesis; L-valine from pyruvate: step 2/4. Functionally, involved in the biosynthesis of branched-chain amino acids (BCAA). Catalyzes an alkyl-migration followed by a ketol-acid reduction of (S)-2-acetolactate (S2AL) to yield (R)-2,3-dihydroxy-isovalerate. In the isomerase reaction, S2AL is rearranged via a Mg-dependent methyl migration to produce 3-hydroxy-3-methyl-2-ketobutyrate (HMKB). In the reductase reaction, this 2-ketoacid undergoes a metal-dependent reduction by NADPH to yield (R)-2,3-dihydroxy-isovalerate. The chain is Ketol-acid reductoisomerase (NADP(+)) from Methanocaldococcus jannaschii (strain ATCC 43067 / DSM 2661 / JAL-1 / JCM 10045 / NBRC 100440) (Methanococcus jannaschii).